The sequence spans 283 residues: 5'-nucleotidase SurE (283 aa).

The a divalent metal cation site is built by Asp14, Asp15, Ser47, and Asn105.

The protein belongs to the SurE nucleotidase family. Requires a divalent metal cation as cofactor.

Its subcellular location is the cytoplasm. It catalyses the reaction a ribonucleoside 5'-phosphate + H2O = a ribonucleoside + phosphate. In terms of biological role, nucleotidase that shows phosphatase activity on nucleoside 5'-monophosphates. The sequence is that of 5'-nucleotidase SurE from Chlamydia trachomatis serovar L2 (strain ATCC VR-902B / DSM 19102 / 434/Bu).